Reading from the N-terminus, the 287-residue chain is MTMMDMNFKYCHKIMKKHSKSFSYAFDLLPEDQRKAVWAIYAVCRKIDDSIDVYGDIQFLNQIKEDIQSIEKYPYEHHHFQSDRRIMMALQHVAQHKNIAFQSFYNLIDTVYKDQHFTMFETDAELFGYCYGVAGTVGEVLTPILSDHETHQTYDVARRLGESLQLINILRDVGEDFDNERVYFSKQRLKQYEVDIAEVYQNGVNNHYIDLWEYYAAIAEKDFQDVMDQIKVFSIEAQPIIELAARIYIEILDEVRQANYTLHERVFVDKRKKAKLFHEINSKYHRI.

Residues 18–21 (HSKS), Y41, and R45 each bind (2E,6E)-farnesyl diphosphate. Mg(2+)-binding residues include D48 and D52. Position 165 (Q165) interacts with (2E,6E)-farnesyl diphosphate. N168 is a Mg(2+) binding site. (2E,6E)-farnesyl diphosphate is bound at residue R171. Position 172 (D172) interacts with Mg(2+). Y248 provides a ligand contact to (2E,6E)-farnesyl diphosphate.

The protein belongs to the phytoene/squalene synthase family. CrtM subfamily. Mg(2+) serves as cofactor.

It catalyses the reaction 2 (2E,6E)-farnesyl diphosphate = 15-cis-4,4'-diapophytoene + 2 diphosphate. Its pathway is carotenoid biosynthesis; staphyloxanthin biosynthesis; staphyloxanthin from farnesyl diphosphate: step 1/5. Its function is as follows. Involved in the biosynthesis of the yellow-orange carotenoid staphyloxanthin, which plays a role in the virulence via its protective function against oxidative stress. Catalyzes the head-to-head condensation of two molecules of farnesyl diphosphate (FPP) into the colorless C(30) carotenoid 4,4'-diapophytoene (dehydrosqualene). The polypeptide is 4,4'-diapophytoene synthase (crtM) (Staphylococcus aureus (strain Mu50 / ATCC 700699)).